The primary structure comprises 568 residues: Pre-mRNA-processing protein 45 (568 aa).

Disordered stretches follow at residues 199–232, 281–449, and 545–568; these read EPPK…AQDQ, LNQN…QQKI, and AGKG…RDEE. Over residues 286-364 the composition is skewed to basic and acidic residues; that stretch reads KTMRDDIGKR…SRDGDSDRSL (79 aa). Over residues 365–379 the composition is skewed to low complexity; the sequence is SRSLSASDRSYSRSR. Composition is skewed to basic and acidic residues over residues 395-419, 426-440, and 557-568; these read RSPE…LERA, ERLE…DLRL, and RDGPVRFVRDEE.

Belongs to the SNW family. In terms of assembly, associated with the spliceosome.

It localises to the nucleus. In terms of biological role, involved in pre-mRNA splicing. The polypeptide is Pre-mRNA-processing protein 45 (PRP45) (Yarrowia lipolytica (strain CLIB 122 / E 150) (Yeast)).